The chain runs to 608 residues: Isoprene synthase, chloroplastic (608 aa).

A chloroplast-targeting transit peptide spans 1 to 45 (MATNLLCLSNKLSSPTPTPSTRFPQSKNFITQKTSLANPKPWRVI). A dimethylallyl diphosphate-binding site is contributed by D350. Positions 350 and 354 each coordinate Mg(2+). A DDXXD motif motif is present at residues 350 to 354 (DDVYD). Dimethylallyl diphosphate-binding residues include E428, R494, and N497. Mg(2+) contacts are provided by N497, T501, and E505.

This sequence belongs to the terpene synthase family. Tpsb subfamily. Mg(2+) is required as a cofactor. Mn(2+) serves as cofactor.

The protein localises to the plastid. Its subcellular location is the chloroplast. The catalysed reaction is dimethylallyl diphosphate = isoprene + diphosphate. Functionally, lyase that catalyzes the formation of isoprene from dimethylallyl diphosphate. The polypeptide is Isoprene synthase, chloroplastic (ISPS) (Pueraria montana var. lobata (Kudzu vine)).